A 220-amino-acid chain; its full sequence is GTP cyclohydrolase 1 (220 aa).

Zn(2+) is bound by residues Cys109, His112, and Cys180.

The protein belongs to the GTP cyclohydrolase I family. As to quaternary structure, homomer.

The enzyme catalyses GTP + H2O = 7,8-dihydroneopterin 3'-triphosphate + formate + H(+). It functions in the pathway cofactor biosynthesis; 7,8-dihydroneopterin triphosphate biosynthesis; 7,8-dihydroneopterin triphosphate from GTP: step 1/1. The polypeptide is GTP cyclohydrolase 1 (Pectobacterium carotovorum subsp. carotovorum (strain PC1)).